Here is a 439-residue protein sequence, read N- to C-terminus: Trigger factor (439 aa).

Residues 162–247 (GDTVTIDYVG…IHEVKAKQLP (86 aa)) enclose the PPIase FKBP-type domain.

Belongs to the FKBP-type PPIase family. Tig subfamily.

It localises to the cytoplasm. The enzyme catalyses [protein]-peptidylproline (omega=180) = [protein]-peptidylproline (omega=0). Its function is as follows. Involved in protein export. Acts as a chaperone by maintaining the newly synthesized protein in an open conformation. Functions as a peptidyl-prolyl cis-trans isomerase. In Lactobacillus delbrueckii subsp. bulgaricus (strain ATCC 11842 / DSM 20081 / BCRC 10696 / JCM 1002 / NBRC 13953 / NCIMB 11778 / NCTC 12712 / WDCM 00102 / Lb 14), this protein is Trigger factor.